The following is a 121-amino-acid chain: MARIAGVDVPREKRVVIALTYIYGIGRTSAQKILAEANVSEDTRVRDLTEDELGRIREIVDGYKVEGDLRREVNLNIKRLMEIASYRGIRHRRGLPTRGQNTKNNARTRKGPVKTVANKKK.

Residues 91–121 (HRRGLPTRGQNTKNNARTRKGPVKTVANKKK) form a disordered region. Over residues 106–121 (ARTRKGPVKTVANKKK) the composition is skewed to basic residues.

The protein belongs to the universal ribosomal protein uS13 family. Part of the 30S ribosomal subunit. Forms a loose heterodimer with protein S19. Forms two bridges to the 50S subunit in the 70S ribosome.

Functionally, located at the top of the head of the 30S subunit, it contacts several helices of the 16S rRNA. In the 70S ribosome it contacts the 23S rRNA (bridge B1a) and protein L5 of the 50S subunit (bridge B1b), connecting the 2 subunits; these bridges are implicated in subunit movement. Contacts the tRNAs in the A and P-sites. This Macrococcus caseolyticus (strain JCSC5402) (Macrococcoides caseolyticum) protein is Small ribosomal subunit protein uS13.